A 416-amino-acid chain; its full sequence is MLQRVNPGHKALADYRSIIRRELYGELQELAGRLRGARVLHINATSFGGGVAEILYTLVPLARDAGLEVEWAIMFGAEPFFNVTKRFHNALQGADYELTIEDRAIYEEYNRRTAQALAESGEEWDIVFVHDPQPALVREFSGGLGEGTRWIWRCHIDTSTPNRQVLDYLWPYIADYDAQVYTMREYTPPGVEMPGLTLIPPAIDPLSPKNMALSRDDASYIVSQFGVDVERPFLLQVSRFDPWKDPLGVIDVYRMVKEEVGEVQLVLVGSMAHDDPEGWDYWYKTVNYAGGDPDIFLFSNLTNVGAIEVNAFQSLADVVIQKSIREGFGLVVSEALWKARPVVASRVGGIPMQITAGGGILIDTIPEAAAACAKLLSDPEFAREMGRRGKEHVRANFLTPRLLRDDLRLFAKLLGV.

The protein belongs to the glycosyltransferase group 1 family. Glycosyltransferase 4 subfamily. As to quaternary structure, homodimer. It depends on Mg(2+) as a cofactor.

The catalysed reaction is an NDP-alpha-D-glucose + D-glucose = alpha,alpha-trehalose + a ribonucleoside 5'-diphosphate + H(+). Its activity is regulated as follows. Inhibited by 20 mM Fe(3+) and Mn(2+). Partially inhibited by Zn(2+) and Ni(2+). Activity is slightly enhanced by 2 mM Fe (3+), Mn (2+), Ca(2+) or Li(+) and by 20 mM Mg(2+), Ca(2+) or Li(+). Functionally, synthesizes trehalose from ADP-glucose and glucose. The reaction is reversible, the equilibrium strongly favors trehalose synthesis. The chain is Trehalose synthase from Rubrobacter xylanophilus (strain DSM 9941 / JCM 11954 / NBRC 16129 / PRD-1).